A 202-amino-acid chain; its full sequence is Ribosome maturation factor RimP (202 aa).

The protein belongs to the RimP family.

The protein resides in the cytoplasm. Its function is as follows. Required for maturation of 30S ribosomal subunits. The sequence is that of Ribosome maturation factor RimP from Polaromonas naphthalenivorans (strain CJ2).